The sequence spans 614 residues: uncharacterized protein (614 aa).

This is an uncharacterized protein from Archaeoglobus fulgidus (strain ATCC 49558 / DSM 4304 / JCM 9628 / NBRC 100126 / VC-16).